Consider the following 216-residue polypeptide: Probable chemoreceptor glutamine deamidase CheD (216 aa).

The protein belongs to the CheD family.

It carries out the reaction L-glutaminyl-[protein] + H2O = L-glutamyl-[protein] + NH4(+). Probably deamidates glutamine residues to glutamate on methyl-accepting chemotaxis receptors (MCPs), playing an important role in chemotaxis. The sequence is that of Probable chemoreceptor glutamine deamidase CheD from Halorhodospira halophila (strain DSM 244 / SL1) (Ectothiorhodospira halophila (strain DSM 244 / SL1)).